A 202-amino-acid polypeptide reads, in one-letter code: Glycerol-3-phosphate acyltransferase (202 aa).

5 helical membrane-spanning segments follow: residues 3-23, 87-107, 118-138, 144-164, and 167-187; these read NLII…LILA, LLWS…YLLF, GAMI…WVVI, ISSL…FIFN, and LEIH…YKHL.

It belongs to the PlsY family. Probably interacts with PlsX.

The protein localises to the cell inner membrane. It catalyses the reaction an acyl phosphate + sn-glycerol 3-phosphate = a 1-acyl-sn-glycero-3-phosphate + phosphate. It functions in the pathway lipid metabolism; phospholipid metabolism. Catalyzes the transfer of an acyl group from acyl-phosphate (acyl-PO(4)) to glycerol-3-phosphate (G3P) to form lysophosphatidic acid (LPA). This enzyme utilizes acyl-phosphate as fatty acyl donor, but not acyl-CoA or acyl-ACP. This chain is Glycerol-3-phosphate acyltransferase, found in Campylobacter jejuni subsp. jejuni serotype O:2 (strain ATCC 700819 / NCTC 11168).